Reading from the N-terminus, the 875-residue chain is MERAGPSFGQQRQQQQPQQQKQQQRDQDSVEAWLDDHWDFTFSYFVRKATREMVNAWFAERVHTIPVCKEGIRGHTESCSCPLQQSPRADNSAPGTPTRKISASEFDRPLRPIVVKDSEGTVSFLSDSEKKEQMPLTPPRFDHDEGDQCSRLLELVKDISSHLDVTALCHKIFLHIHGLISADRYSLFLVCEDSSNDKFLISRLFDVAEGSTLEEVSNNCIRLEWNKGIVGHVAALGEPLNIKDAYEDPRFNAEVDQITGYKTQSILCMPIKNHREEVVGVAQAINKKSGNGGTFTEKDEKDFAAYLAFCGIVLHNAQLYETSLLENKRNQVLLDLASLIFEEQQSLEVILKKIAATIISFMQVQKCTIFIVDEDCSDSFSSVFHMECEELEKSSDTLTREHDANKINYMYAQYVKNTMEPLNIPDVSKDKRFPWTTENTGNVNQQCIRSLLCTPIKNGKKNKVIGVCQLVNKMEENTGKVKPFNRNDEQFLEAFVIFCGLGIQNTQMYEAVERAMAKQMVTLEVLSYHASAAEEETRELQSLAAAVVPSAQTLKITDFSFSDFELSDLETALCTIRMFTDLNLVQNFQMKHEVLCRWILSVKKNYRKNVAYHNWRHAFNTAQCMFAALKAGKIQNKLTDLEILALLIAALSHDLDHRGVNNSYIQRSEHPLAQLYCHSIMEHHHFDQCLMILNSPGNQILSGLSIEEYKTTLKIIKQAILATDLALYIKRRGEFFELIRKNQFNLEDPHQKELFLAMLMTACDLSAITKPWPIQQRIAELVATEFFDQGDRERKELNIEPTDLMNREKKNKIPSMQVGFIDAICLQLYEALTHVSEDCFPLLDGCRKNRQKWQALAEQQEKMLINGESGQAKRN.

2 disordered regions span residues 1-29 (MERA…DQDS) and 78-102 (SCSC…RKIS). Low complexity predominate over residues 10–22 (QQRQQQQPQQQKQ). Over residues 78-101 (SCSCPLQQSPRADNSAPGTPTRKI) the composition is skewed to polar residues. Position 102 is a phosphoserine (Ser-102). GAF domains follow at residues 164–314 (DVTA…GIVL) and 346–503 (SLEV…GLGI). A PDEase domain is found at 536–860 (ETRELQSLAA…QKWQALAEQQ (325 aa)). The active-site Proton donor is the His-613. Residues His-617, His-653, Asp-654, and Asp-764 each contribute to the Zn(2+) site. Asp-654 is a binding site for Mg(2+). Gln-817 contributes to the 3',5'-cyclic GMP binding site.

It belongs to the cyclic nucleotide phosphodiesterase family. Zn(2+) is required as a cofactor. Requires Mg(2+) as cofactor. Post-translationally, phosphorylation is regulated by binding of cGMP to the two allosteric sites. Phosphorylation by PRKG1 leads to its activation. As to expression, expressed in aortic smooth muscle cells, heart, placenta, skeletal muscle and pancreas and, to a much lesser extent, in brain, liver and lung.

The catalysed reaction is 3',5'-cyclic GMP + H2O = GMP + H(+). It functions in the pathway purine metabolism; 3',5'-cyclic GMP degradation; GMP from 3',5'-cyclic GMP: step 1/1. Its activity is regulated as follows. Sildenafil (Viagra) is a highly selective and potent inhibitor of PDE5A and is effective in the treatment of penile erectile dysfunction. Also inhibited by zaprinast. Plays a role in signal transduction by regulating the intracellular concentration of cyclic nucleotides. This phosphodiesterase catalyzes the specific hydrolysis of cGMP to 5'-GMP. Specifically regulates nitric-oxide-generated cGMP. The chain is cGMP-specific 3',5'-cyclic phosphodiesterase from Homo sapiens (Human).